Consider the following 461-residue polypeptide: Argininosuccinate lyase (461 aa).

Belongs to the lyase 1 family. Argininosuccinate lyase subfamily.

The protein localises to the cytoplasm. It catalyses the reaction 2-(N(omega)-L-arginino)succinate = fumarate + L-arginine. It participates in amino-acid biosynthesis; L-arginine biosynthesis; L-arginine from L-ornithine and carbamoyl phosphate: step 3/3. The chain is Argininosuccinate lyase from Trichormus variabilis (strain ATCC 29413 / PCC 7937) (Anabaena variabilis).